A 94-amino-acid chain; its full sequence is Bacterial microcompartment shell protein PduA (94 aa).

The 85-residue stretch at 5 to 89 (ALGMVETKGL…PHTDVEKILP (85 aa)) folds into the BMC domain.

This sequence belongs to the bacterial microcompartments protein family. Homohexamer with a central pore of about 5.6 Angstroms in diameter. The hexamers pack against each other in arrays. Interacts with the N-terminus of PduP which targets PduP to the BMC. Modeling suggests PduC, PduD, PduE, PduL and PduP interact with a cleft formed by the C-terminal segments of 2 adjacent PduA subunits (on the BMC luminal side) in the hexamer.

The protein localises to the bacterial microcompartment. It participates in polyol metabolism; 1,2-propanediol degradation. One of the major shell proteins of the bacterial microcompartment (BMC) dedicated to 1,2-propanediol (1,2-PD) degradation. At least one of PduA or PduJ is required for BMC assembly; it must be encoded as the first gene in the pdu operon. Not required for structural integrity of BMCs, it is required to mitigate propionaldehyde toxicity. Controls diffusion of 1,2-PD into and propionaldehyde out of the BMC shell; residue 40 is particularly important for pore permeability. Overexpression of this protein leads to aberrant filaments that extend the length of the cell, cross the cleavage furrow and impair division. The filaments form nanotubes with a hollow center. The isolated BMC shell component protein ratio for J:A:B':B:K:T:U is approximately 15:10:7:6:1:1:2. Edge residues (particularly Lys-26) are important for function and assembly of the BMC, and influence array formation by hexamers. Interaction with PduA allows encapsulation of at least PduP in BMCs. Probably also targets PduD to the BMC. PduA is probably the hub for binding multiple enzymes to the interior of the BMC; modeling suggests PduC, PduD, PduE, PduG, PduL and PduP are targeted to PduA. Functionally, the 1,2-PD-specific bacterial microcompartment (BMC) concentrates low levels of 1,2-PD catabolic enzymes, concentrates volatile reaction intermediates thus enhancing pathway flux and keeps the level of toxic, mutagenic propionaldehyde low. The protein is Bacterial microcompartment shell protein PduA of Salmonella typhimurium (strain LT2 / SGSC1412 / ATCC 700720).